The chain runs to 518 residues: METDGGDFPSVWERALAQLDDGVTQHQRAFVRLTRPLGLLDGTALLAVPNDLTKDVIEQKVREPLTRALSEAYGSPIRLAVTVDPSIGQVLTPERTGEHSGGVGSVPSVERERGSVLTGLDGDDGLHLDERRSGSLEEDSPLDDSDPDLLFTGYKVDRGPGTGRQPRRPTTRIENSRLNPKYIFETFVIGASNRFAHAAAVAVAEAPAKAYNPLFIYGESGLGKTHLLHAIGHYAQNLYPGVQVRYVNSEEFTNDFINSIRDDKAQAFQRRHRDVDVLLIDDIQFLSNKVQTQEEFFHTFNTLHNASKQVVITSDLPPKQLSGFEERMRSRFEWGLITDVQPPDLETRIAILRKKAIGERLEVPDDVNEYIASKISSNIRELEGALIRVTAFASLNRQPVDMQLAEIVLRDLIPNEETPEITAAAIMGQTASYFSVTLEDLCGTSRSRTLVTARQIAMYLCRELTELSLPKIGQHFGGRDHTTVMHAERKIKQQMAERRSTYNQVTELTNRIKKQSGA.

Positions 1-76 (METDGGDFPS…RALSEAYGSP (76 aa)) are domain I, interacts with DnaA modulators. The segment at 76–176 (PIRLAVTVDP…RRPTTRIENS (101 aa)) is domain II. The segment at 91–174 (LTPERTGEHS…QPRRPTTRIE (84 aa)) is disordered. Residues 124–135 (DGLHLDERRSGS) show a composition bias toward basic and acidic residues. Residues 136 to 147 (LEEDSPLDDSDP) are compositionally biased toward acidic residues. The tract at residues 177–393 (RLNPKYIFET…GALIRVTAFA (217 aa)) is domain III, AAA+ region. ATP is bound by residues Gly-221, Gly-223, Lys-224, and Thr-225. The segment at 394–518 (SLNRQPVDMQ…TNRIKKQSGA (125 aa)) is domain IV, binds dsDNA.

This sequence belongs to the DnaA family. Oligomerizes as a right-handed, spiral filament on DNA at oriC.

The protein resides in the cytoplasm. In terms of biological role, plays an essential role in the initiation and regulation of chromosomal replication. ATP-DnaA binds to the origin of replication (oriC) to initiate formation of the DNA replication initiation complex once per cell cycle. Binds the DnaA box (a 9 base pair repeat at the origin) and separates the double-stranded (ds)DNA. Forms a right-handed helical filament on oriC DNA; dsDNA binds to the exterior of the filament while single-stranded (ss)DNA is stabiized in the filament's interior. The ATP-DnaA-oriC complex binds and stabilizes one strand of the AT-rich DNA unwinding element (DUE), permitting loading of DNA polymerase. After initiation quickly degrades to an ADP-DnaA complex that is not apt for DNA replication. Binds acidic phospholipids. This is Chromosomal replication initiator protein DnaA from Kineococcus radiotolerans (strain ATCC BAA-149 / DSM 14245 / SRS30216).